The chain runs to 347 residues: Haptoglobin (347 aa).

The N-terminal stretch at 1–18 (MSALGAVIALLLWGQLFA) is a signal peptide. A Sushi domain is found at 31–88 (DGCPKPPEIANGYVEHLVRYQCKKYYRLRTEGDGVYTLNNEKQWTNKAVGDKLPECEA). Intrachain disulfides connect Cys-52–Cys-86, Cys-90–Cys-207, Cys-250–Cys-281, and Cys-292–Cys-322. The Peptidase S1 domain occupies 103–345 (ILGGHLDAKG…IQDWVQKTIA (243 aa)). Asn-125, Asn-148, Asn-152, and Asn-182 each carry an N-linked (GlcNAc...) asparagine glycan. Residues 259–264 (VPEKKT) are interaction with CD163.

Belongs to the peptidase S1 family. As to quaternary structure, tetramer of two alpha and two beta chains; disulfide-linked. The hemoglobin/haptoglobin complex is composed of a haptoglobin dimer bound to two hemoglobin alpha-beta dimers. Interacts with CD163. Interacts with ERGIC3. In terms of tissue distribution, expressed by the liver and secreted in plasma.

It localises to the secreted. Functionally, as a result of hemolysis, hemoglobin is found to accumulate in the kidney and is secreted in the urine. Haptoglobin captures, and combines with free plasma hemoglobin to allow hepatic recycling of heme iron and to prevent kidney damage. Haptoglobin also acts as an antioxidant, has antibacterial activity and plays a role in modulating many aspects of the acute phase response. Hemoglobin/haptoglobin complexes are rapidly cleared by the macrophage CD163 scavenger receptor expressed on the surface of liver Kupfer cells through an endocytic lysosomal degradation pathway. This chain is Haptoglobin (HP), found in Ateles geoffroyi (Black-handed spider monkey).